The following is a 1149-amino-acid chain: Structural maintenance of chromosomes protein 6 homolog smc-6 (1149 aa).

77–84 contributes to the ATP binding site; that stretch reads GPNGSGKS. A coiled-coil region spans residues 309–460; it reads LQDETKKEYA…EEEKYTIQRD (152 aa). The segment at 461-687 is flexible hinge; that stretch reads INQLRRKIEQ…DVDEGALARL (227 aa). Residues 714–920 are a coiled coil; it reads YNERDQTKAA…AVDRATVGCD (207 aa). 2 disordered regions span residues 875–900 and 1026–1060; these read NDKK…STTE and EVDE…VRDL. Residues 1026-1038 are compositionally biased toward acidic residues; sequence EVDEHSYDDDSDD. A compositionally biased stretch (basic residues) spans 1042–1058; that stretch reads PRRKKSKKSGQKKKRVR.

Belongs to the SMC family. SMC6 subfamily. As to quaternary structure, interacts with smc-5. As to expression, expressed in the germline (at protein level).

It localises to the nucleus. It is found in the chromosome. Functionally, core component of the smc-5/smc-6 complex. Involved in DNA double-strand break repair by promoting sister-chromatid homologous recombination during meiosis. Also plays a role in the DNA damage repair of ultraviolet (UV) radiation-induced DNA lesions. Promotes efficient DNA replication. The chain is Structural maintenance of chromosomes protein 6 homolog smc-6 from Caenorhabditis elegans.